The primary structure comprises 491 residues: ATP-dependent protease ATPase subunit HslU (491 aa).

ATP contacts are provided by residues I34, 76–81, D296, E364, and R436; that span reads GVGKTE.

This sequence belongs to the ClpX chaperone family. HslU subfamily. As to quaternary structure, a double ring-shaped homohexamer of HslV is capped on each side by a ring-shaped HslU homohexamer. The assembly of the HslU/HslV complex is dependent on binding of ATP.

It localises to the cytoplasm. Its function is as follows. ATPase subunit of a proteasome-like degradation complex; this subunit has chaperone activity. The binding of ATP and its subsequent hydrolysis by HslU are essential for unfolding of protein substrates subsequently hydrolyzed by HslV. HslU recognizes the N-terminal part of its protein substrates and unfolds these before they are guided to HslV for hydrolysis. The sequence is that of ATP-dependent protease ATPase subunit HslU from Chlorobaculum tepidum (strain ATCC 49652 / DSM 12025 / NBRC 103806 / TLS) (Chlorobium tepidum).